The sequence spans 484 residues: Secreted RxLR effector protein 104 (484 aa).

Residues 1–24 (MRSAYPVLTALLVVASSQIAAGSG) form the signal peptide. The RxLR-dEER motif lies at 48-65 (RFLRGSRDVHNNVANEER). An N-linked (GlcNAc...) asparagine glycan is attached at asparagine 175. A disordered region spans residues 324 to 463 (ENPKGQSPYP…SSSVLTPEDV (140 aa)). The segment covering 327–346 (KGQSPYPSTPLTAASTSKGG) has biased composition (polar residues). The span at 402-413 (SSSSGPSRAFAP) shows a compositional bias: low complexity. The span at 418 to 428 (DQTFITENSRL) shows a compositional bias: polar residues.

The protein belongs to the RxLR effector family.

It localises to the secreted. Its subcellular location is the host nucleus. In terms of biological role, secreted effector that completely suppresses the host cell death induced by cell death-inducing proteins. This Plasmopara viticola (Downy mildew of grapevine) protein is Secreted RxLR effector protein 104.